A 108-amino-acid polypeptide reads, in one-letter code: ADM5 (108 aa).

An N-terminal signal peptide occupies residues 1–18 (MTAHILLLWLFASSILGD). A propeptide spanning residues 19–25 (PDSAGRL) is cleaved from the precursor. Residues cysteine 38 and cysteine 43 are joined by a disulfide bond. A disordered region spans residues 61–108 (KELSGKAGRKPQDPYSYGRRRRRRRRRREARLLRRLQDPSLRRAQLAG). A Tyrosine amide modification is found at tyrosine 77. Basic residues predominate over residues 78–89 (GRRRRRRRRRRE). A propeptide spanning residues 89 to 108 (EARLLRRLQDPSLRRAQLAG) is cleaved from the precursor. Residues 90-101 (ARLLRRLQDPSL) show a composition bias toward basic and acidic residues.

It belongs to the adrenomedullin family. In terms of tissue distribution, expressed abundantly in the spleen and thymus. Also expressed in adrenal and pituitary. Not expressed in brain, heart, kidney, liver and stomach.

It is found in the secreted. Its function is as follows. Seems to have a peripheral vasodepressor effect and a central vasopressor effect. The sequence is that of ADM5 (ADM5) from Sus scrofa (Pig).